Reading from the N-terminus, the 209-residue chain is Ribosomal RNA large subunit methyltransferase E (209 aa).

Gly63, Trp65, Asp83, Asp99, and Asp124 together coordinate S-adenosyl-L-methionine. The Proton acceptor role is filled by Lys164.

It belongs to the class I-like SAM-binding methyltransferase superfamily. RNA methyltransferase RlmE family.

It is found in the cytoplasm. It catalyses the reaction uridine(2552) in 23S rRNA + S-adenosyl-L-methionine = 2'-O-methyluridine(2552) in 23S rRNA + S-adenosyl-L-homocysteine + H(+). In terms of biological role, specifically methylates the uridine in position 2552 of 23S rRNA at the 2'-O position of the ribose in the fully assembled 50S ribosomal subunit. The polypeptide is Ribosomal RNA large subunit methyltransferase E (Shigella dysenteriae serotype 1 (strain Sd197)).